A 704-amino-acid chain; its full sequence is Glycogen [starch] synthase, liver (704 aa).

Phosphoserine occurs at positions 8 and 11. Lys40 is a UDP binding site. UDP-alpha-D-glucose contacts are provided by His205 and Arg211. Residues His291, Glu292, Gln294, His297, and Lys301 each contribute to the alpha-D-glucose 6-phosphate site. Residue Arg331 participates in UDP binding. Residue Arg331 coordinates UDP-alpha-D-glucose. His501 contacts alpha-D-glucose 6-phosphate. UDP-alpha-D-glucose-binding residues include Glu510, Trp512, and Gly513. Thr515 serves as a coordination point for UDP. Arg582 and Arg586 together coordinate alpha-D-glucose 6-phosphate. Residues 620–704 (KFHLEPTSPP…KKKLHGEYKN (85 aa)) form a disordered region. The residue at position 627 (Ser627) is a Phosphoserine. Ser641, Ser645, Ser649, and Ser653 each carry phosphoserine; by GSK3-alpha and GSK3-beta. Residues 647–657 (SGSQTSSPQSS) show a composition bias toward low complexity. The residue at position 657 (Ser657) is a Phosphoserine; by CK2. Acidic residues predominate over residues 659-675 (VENEGDEDERYDEEEEA). At Ser684 the chain carries Phosphoserine.

It belongs to the glycosyltransferase 3 family. In terms of assembly, part of the glycogen synthase (GS)-glycogenin complex, a heterooctamer composed of a tetramer of GS and 2 dimers of glycogenin, where each GS protomer binds to one glycogenin subunit (via glycogenin C-terminus); the GS tetramer may dissociate from glycogenin dimers to continue glycogen polymerization on its own. May also form a heterooctamer complex with GYG1 (via GYG1 C-terminus). In terms of processing, primed phosphorylation at Ser-657 (site 5) by CSNK2A1 and CSNK2A2 is required for inhibitory phosphorylation at Ser-641 (site 3a), Ser-645 (site 3b), Ser-649 (site 3c) and Ser-653 (site 4) by GSK3A an GSK3B. Dephosphorylation at Ser-641 and Ser-645 by PP1 activates the enzyme. Phosphorylation at Ser-8 is not required for interaction with GYG1. Interaction with GYG1 does not regulate the phosphorylation at Ser-8 and Ser-641. In terms of tissue distribution, specifically expressed in liver (at protein level).

The enzyme catalyses [(1-&gt;4)-alpha-D-glucosyl](n) + UDP-alpha-D-glucose = [(1-&gt;4)-alpha-D-glucosyl](n+1) + UDP + H(+). It functions in the pathway glycan biosynthesis; glycogen biosynthesis. Its activity is regulated as follows. Allosteric activation by glucose-6-phosphate. Phosphorylation reduces the activity towards UDP-glucose. When in the non-phosphorylated state, glycogen synthase does not require glucose-6-phosphate as an allosteric activator; when phosphorylated it does. Its function is as follows. Glycogen synthase participates in the glycogen biosynthetic process along with glycogenin and glycogen branching enzyme. Extends the primer composed of a few glucose units formed by glycogenin by adding new glucose units to it. In this context, glycogen synthase transfers the glycosyl residue from UDP-Glc to the non-reducing end of alpha-1,4-glucan. This Rattus norvegicus (Rat) protein is Glycogen [starch] synthase, liver.